We begin with the raw amino-acid sequence, 521 residues long: BAR/IMD domain-containing adapter protein 2 (521 aa).

Residues 1–250 (MSLSRSEEMH…VQLMQQIASS (250 aa)) form the IMD domain. The stretch at 132-153 (DALDKCQAELKKLRKKSQGSKN) forms a coiled coil. Phosphoserine is present on residues Ser-262, Ser-324, Ser-326, and Ser-337. The tract at residues 299-370 (VMNGVAGPDS…TLPRSSSMAA (72 aa)) is disordered. Positions 321–335 (QPKSLSPPQSQSKLS) are enriched in low complexity. Thr-341 carries the phosphothreonine modification. Ser-347 is modified (phosphoserine). Over residues 349–368 (TPKNSYATTENKTLPRSSSM) the composition is skewed to polar residues. Phosphothreonine is present on Thr-361. 4 positions are modified to phosphoserine: Ser-367, Ser-385, Ser-396, and Ser-455. In terms of domain architecture, SH3 spans 375–438 (NGRMRVKAIF…PFSYTRVLDS (64 aa)). The disordered stretch occupies residues 445 to 480 (HMSLQQGKSSSTGNLLDKDDLAVPPPDYGTSSRAFP). The segment covering 447-458 (SLQQGKSSSTGN) has biased composition (polar residues).

In terms of assembly, homodimer. Interacts with CDC42 and RAC1 that have been activated by GTP binding. Interacts with ATN1, ADGRB1, DIAPH1, EPS8, SHANK1, SHANK2, SHANK3, TIAM1, WASF1 and WASF2. Interacts with ENAH after recruitment of CDC42. In terms of processing, phosphorylated on tyrosine residues by INSR in response to insulin treatment.

It localises to the cytoplasm. The protein localises to the membrane. The protein resides in the cell projection. It is found in the filopodium. Its subcellular location is the ruffle. It localises to the cytoskeleton. In terms of biological role, adapter protein that links membrane-bound small G-proteins to cytoplasmic effector proteins. Necessary for CDC42-mediated reorganization of the actin cytoskeleton and for RAC1-mediated membrane ruffling. Involved in the regulation of the actin cytoskeleton by WASF family members and the Arp2/3 complex. Plays a role in neurite growth. Acts syngeristically with ENAH to promote filipodia formation. Plays a role in the reorganization of the actin cytoskeleton in response to bacterial infection. Participates in actin bundling when associated with EPS8, promoting filopodial protrusions. In Cricetulus griseus (Chinese hamster), this protein is BAR/IMD domain-containing adapter protein 2 (BAIAP2).